The primary structure comprises 193 residues: Crossover junction endodeoxyribonuclease RuvC (193 aa).

Active-site residues include aspartate 7, glutamate 68, and aspartate 141. Mg(2+) contacts are provided by aspartate 7, glutamate 68, and aspartate 141.

The protein belongs to the RuvC family. As to quaternary structure, homodimer which binds Holliday junction (HJ) DNA. The HJ becomes 2-fold symmetrical on binding to RuvC with unstacked arms; it has a different conformation from HJ DNA in complex with RuvA. In the full resolvosome a probable DNA-RuvA(4)-RuvB(12)-RuvC(2) complex forms which resolves the HJ. Mg(2+) is required as a cofactor.

Its subcellular location is the cytoplasm. It carries out the reaction Endonucleolytic cleavage at a junction such as a reciprocal single-stranded crossover between two homologous DNA duplexes (Holliday junction).. Functionally, the RuvA-RuvB-RuvC complex processes Holliday junction (HJ) DNA during genetic recombination and DNA repair. Endonuclease that resolves HJ intermediates. Cleaves cruciform DNA by making single-stranded nicks across the HJ at symmetrical positions within the homologous arms, yielding a 5'-phosphate and a 3'-hydroxyl group; requires a central core of homology in the junction. The consensus cleavage sequence is 5'-(A/T)TT(C/G)-3'. Cleavage occurs on the 3'-side of the TT dinucleotide at the point of strand exchange. HJ branch migration catalyzed by RuvA-RuvB allows RuvC to scan DNA until it finds its consensus sequence, where it cleaves and resolves the cruciform DNA. This chain is Crossover junction endodeoxyribonuclease RuvC, found in Renibacterium salmoninarum (strain ATCC 33209 / DSM 20767 / JCM 11484 / NBRC 15589 / NCIMB 2235).